A 247-amino-acid chain; its full sequence is 1-(5-phosphoribosyl)-5-[(5-phosphoribosylamino)methylideneamino] imidazole-4-carboxamide isomerase (247 aa).

Asp8 acts as the Proton acceptor in catalysis. Catalysis depends on Asp131, which acts as the Proton donor.

Belongs to the HisA/HisF family.

It is found in the cytoplasm. The enzyme catalyses 1-(5-phospho-beta-D-ribosyl)-5-[(5-phospho-beta-D-ribosylamino)methylideneamino]imidazole-4-carboxamide = 5-[(5-phospho-1-deoxy-D-ribulos-1-ylimino)methylamino]-1-(5-phospho-beta-D-ribosyl)imidazole-4-carboxamide. It participates in amino-acid biosynthesis; L-histidine biosynthesis; L-histidine from 5-phospho-alpha-D-ribose 1-diphosphate: step 4/9. This is 1-(5-phosphoribosyl)-5-[(5-phosphoribosylamino)methylideneamino] imidazole-4-carboxamide isomerase from Ralstonia pickettii (strain 12J).